The following is a 362-amino-acid chain: Microfibril-associated glycoprotein 3 (362 aa).

The first 19 residues, 1 to 19, serve as a signal peptide directing secretion; that stretch reads MKLHCCLFTLVASIIVPAA. Residues 20-146 lie on the Extracellular side of the membrane; it reads FVLEDVDFNQ…TLRVIFTSGD (127 aa). N-linked (GlcNAc...) asparagine glycosylation is found at Asn-36, Asn-41, and Asn-110. Residues 45–137 form the Ig-like C2-type domain; that stretch reads PSSFELSASS…SPIRASYSVT (93 aa). The cysteines at positions 73 and 124 are disulfide-linked. A helical membrane pass occupies residues 147–167; it reads MSVYYMIVCLIAFTITLILNV. At 168 to 362 the chain is on the cytoplasmic side; the sequence is TRLCMMSSHL…KDGAYENSQL (195 aa). Disordered stretches follow at residues 282 to 306 and 319 to 362; these read GIYV…GSLN and HLQS…NSQL. Positions 319–337 are enriched in polar residues; that stretch reads HLQSETKSIDTESQGSSHF.

Glycosylated.

It is found in the cell membrane. Its function is as follows. Component of the elastin-associated microfibrils. The chain is Microfibril-associated glycoprotein 3 (MFAP3) from Pongo abelii (Sumatran orangutan).